A 323-amino-acid polypeptide reads, in one-letter code: tRNA U34 carboxymethyltransferase (323 aa).

Carboxy-S-adenosyl-L-methionine-binding positions include Lys-91, Trp-105, Lys-110, Gly-130, 152-154 (DPT), 181-182 (IE), Met-196, Tyr-200, and Arg-315.

It belongs to the class I-like SAM-binding methyltransferase superfamily. CmoB family. Homotetramer.

It carries out the reaction carboxy-S-adenosyl-L-methionine + 5-hydroxyuridine(34) in tRNA = 5-carboxymethoxyuridine(34) in tRNA + S-adenosyl-L-homocysteine + H(+). Its function is as follows. Catalyzes carboxymethyl transfer from carboxy-S-adenosyl-L-methionine (Cx-SAM) to 5-hydroxyuridine (ho5U) to form 5-carboxymethoxyuridine (cmo5U) at position 34 in tRNAs. This chain is tRNA U34 carboxymethyltransferase, found in Cronobacter sakazakii (strain ATCC BAA-894) (Enterobacter sakazakii).